We begin with the raw amino-acid sequence, 545 residues long: Ribulokinase (545 aa).

Belongs to the ribulokinase family.

It catalyses the reaction D-ribulose + ATP = D-ribulose 5-phosphate + ADP + H(+). The enzyme catalyses L-ribulose + ATP = L-ribulose 5-phosphate + ADP + H(+). It functions in the pathway carbohydrate degradation; L-arabinose degradation via L-ribulose; D-xylulose 5-phosphate from L-arabinose (bacterial route): step 2/3. The sequence is that of Ribulokinase from Staphylococcus aureus (strain MRSA252).